The primary structure comprises 171 residues: Putative defense protein (171 aa).

Positions 1–23 (MKVYACLCAAVVMLVMTSRVSEA) are cleaved as a signal peptide. The 148-residue stretch at 24–171 (RSTGAPLSAC…VQSAPIKIVS (148 aa)) folds into the Reelin domain. Cys-33 and Cys-110 form a disulfide bridge. N-linked (GlcNAc...) asparagine glycosylation is present at Asn-41.

Belongs to the insect defense protein family.

Its subcellular location is the secreted. In terms of biological role, may have antimicrobial activity. This is Putative defense protein from Bombyx mori (Silk moth).